The chain runs to 330 residues: Uracil-DNA glycosylase, mitochondrial (330 aa).

A mitochondrion-targeting transit peptide spans 1-49; it reads MASSTPKTLMDFFQPAKRLKASPSSSSFPAVSVAGGSRDLGSVANSPPR. The active-site Proton acceptor is the Asp173.

Belongs to the uracil-DNA glycosylase (UDG) superfamily. UNG family.

The protein resides in the mitochondrion. The catalysed reaction is Hydrolyzes single-stranded DNA or mismatched double-stranded DNA and polynucleotides, releasing free uracil.. With respect to regulation, inhidited by the small peptide uracil-DNA-glycosylase inhibitor (Ugi). In terms of biological role, excises uracil residues from the DNA which can arise as a result of misincorporation of dUMP residues by DNA polymerase or due to deamination of cytosine. More active on U:G, U:T and U:C mispairs than on U:A pairs. Highly specific for uracil and no activity with 5-substituted uracil or cytosine derivatives. Required for initiation of base excision repair (BER) of uracil. The sequence is that of Uracil-DNA glycosylase, mitochondrial from Arabidopsis thaliana (Mouse-ear cress).